We begin with the raw amino-acid sequence, 77 residues long: Acyl carrier protein (77 aa).

Residues 2 to 77 (SDVAEKVKKI…DAIAYIEEKK (76 aa)) enclose the Carrier domain. Residue Ser37 is modified to O-(pantetheine 4'-phosphoryl)serine.

This sequence belongs to the acyl carrier protein (ACP) family. Post-translationally, 4'-phosphopantetheine is transferred from CoA to a specific serine of apo-ACP by AcpS. This modification is essential for activity because fatty acids are bound in thioester linkage to the sulfhydryl of the prosthetic group.

It localises to the cytoplasm. It participates in lipid metabolism; fatty acid biosynthesis. Its function is as follows. Carrier of the growing fatty acid chain in fatty acid biosynthesis. The protein is Acyl carrier protein of Desulfovibrio desulfuricans (strain ATCC 27774 / DSM 6949 / MB).